The primary structure comprises 439 residues: UPF0489 protein C5orf22 homolog (439 aa).

The segment at Thr-163 to Asp-219 is disordered. The span at Ala-179–Glu-211 shows a compositional bias: polar residues.

The protein belongs to the UPF0489 family.

This Danio rerio (Zebrafish) protein is UPF0489 protein C5orf22 homolog.